We begin with the raw amino-acid sequence, 170 residues long: ATP synthase F(1) complex subunit delta, mitochondrial (170 aa).

Residues 1 to 33 (MIRSIIKSSNNLLKSNVAINSNKRFFATEASAT) constitute a mitochondrion transit peptide.

This sequence belongs to the ATPase epsilon chain family. Component of the ATP synthase complex composed at least of ATP5F1A/subunit alpha, ATP5F1B/subunit beta, ATP5MC1/subunit c (homooctomer), MT-ATP6/subunit a, MT-ATP8/subunit 8, ATP5ME/subunit e, ATP5MF/subunit f, ATP5MG/subunit g, ATP5MK/subunit k, ATP5MJ/subunit j, ATP5F1C/subunit gamma, ATP5F1D/subunit delta, ATP5F1E/subunit epsilon, ATP5PF/subunit F6, ATP5PB/subunit b, ATP5PD/subunit d, ATP5PO/subunit OSCP. ATP synthase complex consists of a soluble F(1) head domain (subunits alpha(3) and beta(3)) - the catalytic core - and a membrane F(0) domain - the membrane proton channel (subunits c, a, 8, e, f, g, k and j). These two domains are linked by a central stalk (subunits gamma, delta, and epsilon) rotating inside the F1 region and a stationary peripheral stalk (subunits F6, b, d, and OSCP).

It localises to the mitochondrion. The protein resides in the mitochondrion inner membrane. Its function is as follows. Subunit delta, of the mitochondrial membrane ATP synthase complex (F(1)F(0) ATP synthase or Complex V) that produces ATP from ADP in the presence of a proton gradient across the membrane which is generated by electron transport complexes of the respiratory chain. ATP synthase complex consist of a soluble F(1) head domain - the catalytic core - and a membrane F(1) domain - the membrane proton channel. These two domains are linked by a central stalk rotating inside the F(1) region and a stationary peripheral stalk. During catalysis, ATP synthesis in the catalytic domain of F(1) is coupled via a rotary mechanism of the central stalk subunits to proton translocation. In vivo, can only synthesize ATP although its ATP hydrolase activity can be activated artificially in vitro. With the central stalk subunit gamma, is essential for the biogenesis of F(1) catalytic part of the ATP synthase complex namely in the formation of F1 assembly intermediate. The chain is ATP synthase F(1) complex subunit delta, mitochondrial from Dictyostelium discoideum (Social amoeba).